A 10746-amino-acid chain; its full sequence is Extracellular matrix-binding protein ebh (10746 aa).

Positions 1–39 are cleaved as a signal peptide; sequence MNYRDKIQKFSIRKYTVGTFSTVIATLVFLGLNTSQAQA. Composition is skewed to polar residues over residues 41–59 and 67–113; these read ETNQPASALKQKQQNGDTQ and VQNS…SQNE. 3 disordered regions span residues 41–174, 246–274, and 1340–1372; these read ETNQ…GNVQ, MPQRQQTSRRSSRIQTRSIESRAAEPRSV, and IAGNEKAQAEAGGRPNYKTTGYSQSNPTSDGQR. Residues 120-130 show a composition bias toward low complexity; sequence AAATPTQSAKA. A compositionally biased stretch (basic and acidic residues) spans 132–158; the sequence is SKHEQSESRAANKKENDNKATHVESHE. The span at 162–173 shows a compositional bias: polar residues; the sequence is VTASDSSDSGNV. Residues 248–263 are compositionally biased toward low complexity; the sequence is QRQQTSRRSSRIQTRS. Polar residues predominate over residues 1356–1372; sequence YKTTGYSQSNPTSDGQR. 59 FIVAR domains span residues 2520–2576, 2606–2662, 2683–2746, 2776–2832, 2860–2915, 2943–2998, 3026–3081, 3150–3208, 3276–3335, 3403–3461, 3529–3587, 3655–3713, 3781–3839, 3907–3965, 4033–4091, 4159–4217, 4285–4343, 4411–4469, 4537–4595, 4663–4721, 4789–4847, 4915–4973, 5041–5099, 5167–5225, 5293–5351, 5419–5477, 5545–5603, 5671–5729, 5797–5855, 5923–5981, 6049–6107, 6175–6232, 6300–6358, 6426–6484, 6552–6610, 6678–6736, 6804–6862, 6930–6988, 7056–7114, 7182–7240, 7308–7366, 7434–7492, 7560–7618, 7686–7744, 7812–7870, 7938–7996, 8064–8125, 8190–8251, 8316–8374, 8442–8500, 8568–8625, 8693–8751, 8819–8877, 8945–9003, 9071–9129, 9197–9255, 9323–9377, 9445–9504, and 9699–9755; these read AKNH…VNAA, SKNN…ISDE, DTHE…VQTA, AKTK…IAAK, AKTQ…IRQN, AKNQ…INTN, AKTQ…INDK, AMTK…VNQK, AMTG…VNNA, AMGN…VNSA, AMGN…VTEA, AMNT…ITQK, AMAS…VEAA, AMGN…VEQA, AMGQ…VTAA, AMKG…ITQA, QMGN…VEAA, AMAN…VENA, AMGT…INQI, AMGQ…VDRA, AMNS…VDNA, AMGA…INGM, AMTV…VNSA, AMHS…VEQA, AMGQ…VERA, AMTA…VTNA, AMKG…INQA, AMTN…VESA, AMSN…VEQA, AMNQ…INQK, AMGN…VQAA, AMGQ…VEAA, AMQR…VEQA, AMDQ…VTAA, AMNQ…VTQA, AMER…VEAA, AMGN…VEAA, AMDK…INQA, AMTQ…ITAA, AMTQ…IQQA, AMTN…VEQA, AMTQ…VAQA, AMGT…VTQA, AMSN…ITRA, AMDQ…ITNE, AMEL…VNRA, AMHG…INQA, LMDA…VTSA, AMKA…IDQA, AMEA…VEQL, AMQA…VEQL, AMET…VDQA, SMDQ…VDQA, VMDQ…VIKL, and AMET…INGA. A compositionally biased stretch (polar residues) spans 7066–7080; that stretch reads DNATTKQNQNYTDSS. Positions 7066–7085 are disordered; that stretch reads DNATTKQNQNYTDSSPNKKD. The span at 10492 to 10507 shows a compositional bias: polar residues; the sequence is DHSKPSSNSDGQSNSH. The disordered stretch occupies residues 10492–10530; sequence DHSKPSSNSDGQSNSHLHVGYGTVNHPFNSSPIGHKKKL. A helical membrane pass occupies residues 10552–10572; that stretch reads IKNALGVVGISGLLASFWFFI. The disordered stretch occupies residues 10649–10746; that stretch reads RRKEDEEDVE…KKKKSKKNKK (98 aa). Basic and acidic residues predominate over residues 10664-10674; that stretch reads TDEKVLQDNEH. Positions 10719–10746 are enriched in basic residues; that stretch reads KGKKSASKKPSKKVAAKKKKKKSKKNKK.

Its subcellular location is the cell membrane. This is Extracellular matrix-binding protein ebh (ebh) from Staphylococcus aureus (strain MRSA252).